The chain runs to 170 residues: UPF0161 protein At3g09310 (170 aa).

Disordered regions lie at residues 49-70 and 147-170; these read CLSAKSTPSKPDPASPQDGEEL and SGIKLREGDEEEEDNYDDEDQRKI. Residues 154 to 170 show a composition bias toward acidic residues; that stretch reads GDEEEEDNYDDEDQRKI.

Belongs to the UPF0161 family.

The chain is UPF0161 protein At3g09310 from Arabidopsis thaliana (Mouse-ear cress).